The following is a 116-amino-acid chain: Large ribosomal subunit protein uL18 (116 aa).

Belongs to the universal ribosomal protein uL18 family. In terms of assembly, part of the 50S ribosomal subunit; part of the 5S rRNA/L5/L18/L25 subcomplex. Contacts the 5S and 23S rRNAs.

This is one of the proteins that bind and probably mediate the attachment of the 5S RNA into the large ribosomal subunit, where it forms part of the central protuberance. This chain is Large ribosomal subunit protein uL18, found in Shewanella frigidimarina (strain NCIMB 400).